A 222-amino-acid polypeptide reads, in one-letter code: 6,7-dimethyl-8-ribityllumazine synthase, chloroplastic (222 aa).

Residues 1–66 (MASFAASQTC…NRASFVVTNA (66 aa)) constitute a chloroplast transit peptide. 5-amino-6-(D-ribitylamino)uracil is bound by residues Phe-89, 122–124 (AYE), and 146–148 (AVV). 151 to 152 (DT) contributes to the (2S)-2-hydroxy-3-oxobutyl phosphate binding site. His-154 acts as the Proton donor in catalysis. Phe-179 contributes to the 5-amino-6-(D-ribitylamino)uracil binding site. Residue Arg-193 coordinates (2S)-2-hydroxy-3-oxobutyl phosphate.

Belongs to the DMRL synthase family. Oligomer forming an icosahedral capsid.

The protein resides in the plastid. It is found in the chloroplast. The enzyme catalyses (2S)-2-hydroxy-3-oxobutyl phosphate + 5-amino-6-(D-ribitylamino)uracil = 6,7-dimethyl-8-(1-D-ribityl)lumazine + phosphate + 2 H2O + H(+). The protein operates within cofactor biosynthesis; riboflavin biosynthesis; riboflavin from 2-hydroxy-3-oxobutyl phosphate and 5-amino-6-(D-ribitylamino)uracil: step 1/2. Functionally, catalyzes the formation of 6,7-dimethyl-8-ribityllumazine by condensation of 5-amino-6-(D-ribitylamino)uracil with 3,4-dihydroxy-2-butanone 4-phosphate. This is the penultimate step in the biosynthesis of riboflavin. This is 6,7-dimethyl-8-ribityllumazine synthase, chloroplastic from Spinacia oleracea (Spinach).